Reading from the N-terminus, the 801-residue chain is Cation/H(+) antiporter 7 (801 aa).

The next 13 membrane-spanning stretches (helical) occupy residues 58-78, 83-103, 128-148, 154-174, 192-212, 223-243, 254-274, 287-307, 312-332, 340-360, 377-397, 407-427, and 438-458; these read PNLE…EILF, IPIP…LFSY, GAFG…VGML, RAAL…YILM, EIIL…LTDL, VQSC…GTVL, IVIV…MLWI, VYIY…LNFF, YGWF…SALI, VGVL…ISWL, AISV…ITAF, IVLA…LGYI, and FTIA…AIEF.

The protein belongs to the monovalent cation:proton antiporter 2 (CPA2) transporter (TC 2.A.37) family. CHX (TC 2.A.37.4) subfamily. As to expression, expressed in pollen.

The protein localises to the membrane. Its function is as follows. May operate as a cation/H(+) antiporter. The sequence is that of Cation/H(+) antiporter 7 (CHX7) from Arabidopsis thaliana (Mouse-ear cress).